A 170-amino-acid polypeptide reads, in one-letter code: SKP1-like protein 16 (170 aa).

Residues 109 to 167 (ILAVNYLNVQDLLGLTCQTVADHMKDMSPEEVRELFNIENDYTPEEEDAIRKENAWAFE) are interaction with the F-box domain of F-box proteins.

Belongs to the SKP1 family. In terms of assembly, part of a SCF (SKP1-cullin-F-box) protein ligase complex. Interacts with CPR1/CPR30, At3g61590 and At4g11590. Mainly detected in the siliques.

The protein resides in the nucleus. It functions in the pathway protein modification; protein ubiquitination. Its function is as follows. Involved in ubiquitination and subsequent proteasomal degradation of target proteins. Together with CUL1, RBX1 and a F-box protein, it forms a SCF E3 ubiquitin ligase complex. The functional specificity of this complex depends on the type of F-box protein. In the SCF complex, it serves as an adapter that links the F-box protein to CUL1. The polypeptide is SKP1-like protein 16 (ASK16) (Arabidopsis thaliana (Mouse-ear cress)).